A 348-amino-acid chain; its full sequence is MSHEKSFLVSGDSYPPPNPGYPVGPQAPMPPYVQPPYPGAPYPQAAFQPSPYGQPGYPHGPGPYPQGGYPQGPYPQGGYPQGPYPQSPFPPNPYGQPPPFQDPGSPQHGNYQEEGPPSYYDNQDFPSVNWDKSIRQAFIRKVFLVLTLQLSVTLSTVAIFTFVGEVKGFVRANVWTYYVSYAIFFISLIVLSCCGDFRRKHPWNLVALSILTISLSYMVGMIASFYNTEAVIMAVGITTAVCFTVVIFSMQTRYDFTSCMGVLLVSVVVLFIFAILCIFIRNRILEIVYASLGALLFTCFLAVDTQLLLGNKQLSLSPEEYVFAALNLYTDIINIFLYILTIIGRAKE.

Positions 1-118 (MSHEKSFLVS…GNYQEEGPPS (118 aa)) are disordered. Positions 14 to 41 (YPPPNPGYPVGPQAPMPPYVQPPYPGAP) are enriched in pro residues. Over residues 42-57 (YPQAAFQPSPYGQPGY) the composition is skewed to low complexity. Positions 82 to 101 (GPYPQSPFPPNPYGQPPPFQ) are enriched in pro residues. 7 helical membrane passes run 142 to 162 (VFLVLTLQLSVTLSTVAIFTF), 174 to 194 (VWTYYVSYAIFFISLIVLSCC), 205 to 225 (LVALSILTISLSYMVGMIASF), 230 to 250 (AVIMAVGITTAVCFTVVIFSM), 260 to 280 (MGVLLVSVVVLFIFAILCIFI), 284 to 304 (ILEIVYASLGALLFTCFLAVD), and 323 to 343 (FAALNLYTDIINIFLYILTII).

The protein belongs to the BI1 family. LFG subfamily.

It localises to the membrane. Functionally, potential apoptotic regulator. This is Protein lifeguard 1 (Grina) from Rattus norvegicus (Rat).